The chain runs to 316 residues: L-lactate dehydrogenase (316 aa).

NAD(+) contacts are provided by residues V15, D36, R41, Y66, and 80–81 (GA). Residues Q83, R90, and 122–125 (NPVD) each bind substrate. Residues 120 to 122 (ATN) and T145 contribute to the NAD(+) site. Substrate is bound at residue 150 to 153 (DTAR). The beta-D-fructose 1,6-bisphosphate site is built by R155 and H170. H177 (proton acceptor) is an active-site residue. Y222 carries the post-translational modification Phosphotyrosine. T231 is a binding site for substrate. The segment at 287–316 (DPGLSDEEREALRDSARALRDSRADLTVGT) is disordered. Residues 296 to 310 (EALRDSARALRDSRA) are compositionally biased toward basic and acidic residues.

It belongs to the LDH/MDH superfamily. LDH family. Homotetramer.

It is found in the cytoplasm. It carries out the reaction (S)-lactate + NAD(+) = pyruvate + NADH + H(+). It functions in the pathway fermentation; pyruvate fermentation to lactate; (S)-lactate from pyruvate: step 1/1. Allosterically activated by fructose 1,6-bisphosphate (FBP). Catalyzes the conversion of lactate to pyruvate. The polypeptide is L-lactate dehydrogenase (Salinibacter ruber (strain DSM 13855 / M31)).